We begin with the raw amino-acid sequence, 387 residues long: Phosphoglycerate kinase (387 aa).

Residues 21–23 (DLN), R36, 59–62 (HLGR), R113, and R146 contribute to the substrate site. ATP-binding positions include K197, E314, and 340–343 (GGDT).

Belongs to the phosphoglycerate kinase family. In terms of assembly, monomer.

The protein resides in the cytoplasm. It catalyses the reaction (2R)-3-phosphoglycerate + ATP = (2R)-3-phospho-glyceroyl phosphate + ADP. It functions in the pathway carbohydrate degradation; glycolysis; pyruvate from D-glyceraldehyde 3-phosphate: step 2/5. This Pseudomonas paraeruginosa (strain DSM 24068 / PA7) (Pseudomonas aeruginosa (strain PA7)) protein is Phosphoglycerate kinase.